An 887-amino-acid chain; its full sequence is Tiger protein O1 (887 aa).

The N-terminal stretch at 1–21 is a signal peptide; that stretch reads MEKKLLIIVIVFLFSTIQVFC. The Extracellular portion of the chain corresponds to 22-845; that stretch reads RIDDKTFVIS…SLSKKSIILL (824 aa). N-linked (GlcNAc...) asparagine glycans are attached at residues Asn32, Asn70, Asn186, Asn207, Asn219, Asn259, Asn297, Asn314, Asn325, Asn338, Asn354, Asn393, Asn431, Asn588, Asn629, Asn652, Asn687, Asn710, Asn720, Asn730, Asn775, Asn788, Asn811, and Asn816. The 89-residue stretch at 277–365 folds into the IPT/TIG 1 domain; that stretch reads NSVPYSKGGL…TNENKLLFNY (89 aa). Residues 710–767 enclose the IPT/TIG 2 domain; sequence NTSSINVNGGNLTIYGKNFYNVSNIKVEVDNQLKCNKIEFINLNSLTCFLPPFIETLF. Positions 811–835 are disordered; sequence NDTSENSTNDILNHEKNNNNQKDGS. Residues 846–866 traverse the membrane as a helical segment; sequence SILLPSFIILIVSLAIVILVI. Over 867–887 the chain is Cytoplasmic; that stretch reads KRNKTKHSKNMSSKEKELMKQ.

The protein resides in the membrane. The protein is Tiger protein O1 (tgrO1) of Dictyostelium discoideum (Social amoeba).